An 85-amino-acid polypeptide reads, in one-letter code: MIEDPSKKISLWQKWINVDPKKRILFSLGLFALSASALYIDQMDPDTNPFKIDRKDVTYKTIDYSKPVGQGRVTIVRNGEIIKEE.

The first 35 residues, 1 to 35 (MIEDPSKKISLWQKWINVDPKKRILFSLGLFALSA), serve as a signal peptide directing secretion.

The protein resides in the secreted. This is an uncharacterized protein from Dictyostelium discoideum (Social amoeba).